Reading from the N-terminus, the 144-residue chain is Phosphomevalonate dehydratase small subunit (144 aa).

Ser-65 functions as the Proton acceptor in the catalytic mechanism.

This sequence belongs to the AcnX type II small subunit family. In terms of assembly, heterodimer composed of a large subunit (PMDh-L) and a small subunit (PMDh-S).

It catalyses the reaction (R)-5-phosphomevalonate = (2E)-3-methyl-5-phosphooxypent-2-enoate + H2O. It participates in isoprenoid biosynthesis; isopentenyl diphosphate biosynthesis via mevalonate pathway. In terms of biological role, component of a hydro-lyase that catalyzes the dehydration of mevalonate 5-phosphate (MVA5P) to form trans-anhydromevalonate 5-phosphate (tAHMP). Involved in the archaeal mevalonate (MVA) pathway, which provides fundamental precursors for isoprenoid biosynthesis, such as isopentenyl diphosphate (IPP) and dimethylallyl diphosphate (DMAPP). The polypeptide is Phosphomevalonate dehydratase small subunit (Methanosarcina acetivorans (strain ATCC 35395 / DSM 2834 / JCM 12185 / C2A)).